The primary structure comprises 112 residues: Transcriptional regulator WhiD (112 aa).

The region spanning 22 to 86 is the 4Fe-4S Wbl-type domain; the sequence is ACRGVDSSLF…GGLTEDEREE (65 aa). The [4Fe-4S] cluster site is built by Cys-23, Cys-53, Cys-56, and Cys-62.

It belongs to the WhiB family. In terms of assembly, the 4Fe-4S form is a monomer; upon oxidation forms a disulfide-bonded homodimer. Requires [4Fe-4S] cluster as cofactor. Post-translationally, can be nitrosylated by NO, 8 NO react per cluster. These complexes are quite stable under anaerobic conditions, but degrade slowly aerobically. Upon Fe-S cluster removal intramolecular disulfide bonds are formed.

The protein resides in the cytoplasm. Functionally, acts as a transcriptional regulator. Probably redox-responsive. The apo- but not holo-form probably binds DNA. Plays a positive role in prespore maturation and the initiation of sporulation septation. This chain is Transcriptional regulator WhiD (whiD), found in Streptomyces coelicolor (strain ATCC BAA-471 / A3(2) / M145).